A 122-amino-acid polypeptide reads, in one-letter code: MIQTETRLKVADNSGARELLVIRVMGGSKRKTGNIGDIVVAAVKQATPGGVVKKGDVVKAVIVRTKSGARREDGSYIKFDENAAVIINADKSPRGTRIFGPVARELREGDFMKIVSLAHEVL.

Belongs to the universal ribosomal protein uL14 family. In terms of assembly, part of the 50S ribosomal subunit. Forms a cluster with proteins L3 and L19. In the 70S ribosome, L14 and L19 interact and together make contacts with the 16S rRNA in bridges B5 and B8.

Functionally, binds to 23S rRNA. Forms part of two intersubunit bridges in the 70S ribosome. This chain is Large ribosomal subunit protein uL14, found in Lactobacillus delbrueckii subsp. bulgaricus (strain ATCC 11842 / DSM 20081 / BCRC 10696 / JCM 1002 / NBRC 13953 / NCIMB 11778 / NCTC 12712 / WDCM 00102 / Lb 14).